Reading from the N-terminus, the 448-residue chain is MAAPDRDTITAIATPPGKGGVGIVRISGSNLGPVLDALLGRPPRPRYAEFRHFLDADGRAIDSGIALYFPAPRSFTGENVLELHGHGGPVVLDLLLRRTLQLGCRLARPGEFSERAYLNGKLDLAQAEAIADLIDSSTEESARSAQRSLQGEFSAHIHHLQECLVRLRTYVEAAIDFSDEDIDLLDDATLGHEITGLLDELDTIDTKAHQGALLREGLTTVIAGRPNVGKSSLLNALAGRDLAIVTEIPGTTRDLLRESLQVGGLPLHIVDTAGLRDSEDPIEREGIRRARDALANADCILLVCDARHTEAGDALPADLPETIPLIRIFNKIDLTGAPASLTVERETTVIHLSARTGEGVDLLRQEIIRRAGYKKGTEGVFSARRRHLDAIRRARAAVANARLYLHTKTAELLAEELRAAQKALGEITGEFTNEDLLNRIFSSFCLGK.

Residues arginine 25, glutamate 82, and lysine 121 each coordinate (6S)-5-formyl-5,6,7,8-tetrahydrofolate. A TrmE-type G domain is found at 217-372; that stretch reads GLTTVIAGRP…LRQEIIRRAG (156 aa). Asparagine 227 is a binding site for K(+). Residues 227-232, 246-252, 271-274, and 353-355 contribute to the GTP site; these read NVGKSS, TEIPGTT, DTAG, and SAR. Serine 231 is a Mg(2+) binding site. K(+) contacts are provided by threonine 246, isoleucine 248, and threonine 251. Residue threonine 252 participates in Mg(2+) binding. Lysine 448 contacts (6S)-5-formyl-5,6,7,8-tetrahydrofolate.

Belongs to the TRAFAC class TrmE-Era-EngA-EngB-Septin-like GTPase superfamily. TrmE GTPase family. In terms of assembly, homodimer. Heterotetramer of two MnmE and two MnmG subunits. K(+) serves as cofactor.

The protein resides in the cytoplasm. Its function is as follows. Exhibits a very high intrinsic GTPase hydrolysis rate. Involved in the addition of a carboxymethylaminomethyl (cmnm) group at the wobble position (U34) of certain tRNAs, forming tRNA-cmnm(5)s(2)U34. The protein is tRNA modification GTPase MnmE of Methylococcus capsulatus (strain ATCC 33009 / NCIMB 11132 / Bath).